The primary structure comprises 85 residues: Large ribosomal subunit protein bL27 (85 aa).

A disordered region spans residues 1–21; the sequence is MAHKKAAGSSRNGRDSESKRL.

The protein belongs to the bacterial ribosomal protein bL27 family.

The protein is Large ribosomal subunit protein bL27 of Chromohalobacter salexigens (strain ATCC BAA-138 / DSM 3043 / CIP 106854 / NCIMB 13768 / 1H11).